Consider the following 2021-residue polypeptide: MSSLAQQLQSIASLDAARLTSAYGAPSGKSYLFPPDVASSHDIDSIFDLAQSGFDELLSLDPEMEEFEEELFSESAKRTDRMVLSKEENDNLDRTLGRCLRRLGKWIRLMAGGKCIEWMVRRFRVHEMNVDEVLRSFLPYHESPNFPRILAIVTIPKTSPYYATFAPLVKNAQPIPRSYIVTSISPAKDKSLVLLGDIASMVQQAVKEGVVHHALLTFWTATMVDLLEGARHGKGANEGVVKQLVESFVTLLETPKAGEDVNAAVYPPLVLLTRTVPLADEPFLAIVSSLLTPGTGSNPSQRMLTLLVILNDRHTWSLGLGEHATENLAKVSQLGEILVAAMDKYRFEKALNIVVKSMLEKPDLHAKALATVLEHESLPTSVTELASTNLLQLGSSTDSQEVKAACKSLLTNLRERHPSIVDTAFLQASASLEIDTHPVDHGLVQKPSGEVAFLDVYAADISSRVTGVKSVIDMAKKGEEIESSITALEARLSDVDENVVNALYEEPKSLLEILPVEKYIAGVKPVFWAVSPISHIIGLHLDFISQHLLVSHPEAGKQIYESLLFPIFLSTEKRQPLTKSQALKLLNGGFKKLDKLSTIGPEIGKAREEGMKGAQKGNLVIAKALAGATLSSSTFEDDISFLIAQLDSTTSSARLLAYLILHSLVLTLRGPRQLSTSLSILKYLSPRLTGHSLRDLKHADENVNTEYMESVYKKPEETRTTLRAIVSILAAMGKVIKPIGQIVWLSGESKAKDASYKTFAQQIYLWANIAILPANVAHFLLRSLLTQLGEEALLFFSSIWTSSTSPVPLRISALKHALAFIHAYATLPTSPAAQGQPVDFQVVLPQILIALQDSDKDVRRVAVDVLRSVEGGEGMGDVYALDTIYGDRSEMTQLLKSVDRKKYIETLLEVAEEFVIDRLRLKAFHTEVLNMQSGKNRKESAHRRAIIGFLMSHVASYRAIDPRLVLLSLLSDVHDTSILRSAIPLLASLFDDKSEESLWLSSLPDGQQALYVQALMGSLRVQSVSVLGEAGGEGWEFLLNLLDASKSSRFIARLRILSFKAMVGGVFSALEAHQQIEYIIALIQCIHALPTDDALDAVKVLEKLDIQPRVLIELIEHLSDPLETSVNRKRQRQDAADEDRPTQAVHELITFVDSRNWPSIPASAPLVASLMSILSALLAKRLIVKEGIDYLEQEVFGAILALVERITDAQEIQRAHVGIEVVIKVIRASTNPRTAQRALLVASELARLIPDAVLHNVMPIFTFMGASDFQRDDAYTFGVVEKTVSRIVPVMTQSLKEKAQNSLELYTKSLTFLSIFTDMAGRLPRHRTLPFFVHLVKSLGASDYLAPVCMLLVDRATTKAGRNKESVSTALELPANLVAAFDVSVKTQVLGEIVQELARLIGDLSKADKEAFLSQTISENDATDRPLRQVTYLLSFLSSILGQLRGKACSQALVQSAVRQLIVLAASTSQPVMATTDIPSNLHKTLASTMLLLSADNFLGVTAELLSDGSEQDIIMSLGVFAERLPLIKSEVRLRCTKVIAEILKRIGDLLAASGATVNAALEAVKSVTKTAIAQEDGALASVLPTVVGCIGKVKDSAVIVAALSLVELLVRRLAARTIPFIQSILDTSLNLIKSTKLAATATNQAFVTLSSVIETIPTFISSKQLNAILITTIDYRRVEETNSASLFTTLAKKIRTKSLFPVLIEAWKTVQEKGGDNEMKGFFEMLRLTLKNAAREDLPSMLKPVFAFFLDVFDLRHRLQLKGVDTRVVNDVEESAIGSFLELVTKLNEPTFKPLFIRLYDWAVIDLAEGKNADDGRLTERKIVLLHVMMGLLTKFKNLLSPYMGILFPHIQELLPAFASGSVRSEPLWTLLLNVLGKSFEVDSGAFWTDALEIELLPQLVAQVPLFLPIAPSPQSPRPISSCLANLAGSTTAENVLRRLNTAVCLATRSDDPKVRLAALDALSAIWDAQAEEMVGLVPETVSEFLAELLEDESKDVEIAARGVLAKIEKVTGSLKEYLE.

5 HEAT repeats span residues 837-875 (PVDF…GEGM), 976-1014 (TSIL…YVQA), 1281-1319 (EKTV…FTDM), 1935-1973 (ENVL…AQAE), and 1977-2015 (GLVP…VTGS).

Belongs to the HEATR1/UTP10 family. Component of the ribosomal small subunit (SSU) processome.

The protein localises to the nucleus. It localises to the nucleolus. Involved in nucleolar processing of pre-18S ribosomal RNA. Involved in ribosome biosynthesis. In Cryptococcus neoformans var. neoformans serotype D (strain JEC21 / ATCC MYA-565) (Filobasidiella neoformans), this protein is U3 small nucleolar RNA-associated protein 10 (UTP10).